The sequence spans 432 residues: Trigger factor (432 aa).

The region spanning 161-246 (GKRVSIDFVG…VNKVEARQLP (86 aa)) is the PPIase FKBP-type domain.

This sequence belongs to the FKBP-type PPIase family. Tig subfamily.

Its subcellular location is the cytoplasm. It carries out the reaction [protein]-peptidylproline (omega=180) = [protein]-peptidylproline (omega=0). In terms of biological role, involved in protein export. Acts as a chaperone by maintaining the newly synthesized protein in an open conformation. Functions as a peptidyl-prolyl cis-trans isomerase. In Vibrio vulnificus (strain CMCP6), this protein is Trigger factor.